The chain runs to 85 residues: Toxin BmKT (85 aa).

An N-terminal signal peptide occupies residues 1–19 (MNYLVFFSLALLLMTGVES). An LCN-type CS-alpha/beta domain is found at 21–83 (RDGYIADDKN…VPIRVPGKCN (63 aa)). 4 disulfides stabilise this stretch: cysteine 31-cysteine 82, cysteine 35-cysteine 55, cysteine 41-cysteine 65, and cysteine 45-cysteine 67.

Belongs to the long (4 C-C) scorpion toxin superfamily. Sodium channel inhibitor family. Alpha subfamily. Expressed by the venom gland.

It is found in the secreted. Binds to sodium channels (Nav) and inhibits the inactivation of the activated channels, thereby blocking neuronal transmission. Tested on mice, has antitumor effect and strong inhibitory effect on pain. The chain is Toxin BmKT from Olivierus martensii (Manchurian scorpion).